Consider the following 354-residue polypeptide: GTPase Obg (354 aa).

The 159-residue stretch at 1-159 (MKFVDEVKIH…RDLVLELKLL (159 aa)) folds into the Obg domain. Residues 160-333 (ADVGIVGYPN…LLDAVGRALF (174 aa)) enclose the OBG-type G domain. Residues 166–173 (GYPNAGKS), 191–195 (FTTLT), 212–215 (DIPG), 283–286 (TKID), and 314–316 (SAV) contribute to the GTP site. Residues S173 and T193 each contribute to the Mg(2+) site.

This sequence belongs to the TRAFAC class OBG-HflX-like GTPase superfamily. OBG GTPase family. In terms of assembly, monomer. Mg(2+) is required as a cofactor.

The protein localises to the cytoplasm. Functionally, an essential GTPase which binds GTP, GDP and possibly (p)ppGpp with moderate affinity, with high nucleotide exchange rates and a fairly low GTP hydrolysis rate. Plays a role in control of the cell cycle, stress response, ribosome biogenesis and in those bacteria that undergo differentiation, in morphogenesis control. The protein is GTPase Obg of Anaeromyxobacter dehalogenans (strain 2CP-1 / ATCC BAA-258).